We begin with the raw amino-acid sequence, 436 residues long: MKKLKVVHYINNFFAGVGGEEKANIPPEMREGAVGPGMALAAALGDEAEVVATVICGDSYYGENMDSARKEILEMIKDAQPDAFVAGPAFNAGRYGVACGSIAKAVEEDLGIPSVTGMYVENPGVDMYRKDIQIIETGNSAADLRNSMPKLAKLVMKKAKGELVGPPEVEGYHMMGIRTNFFHEKRGSERAIDMLVNKLNGEKFETEYPMPVFDRVPPNPAVKDMSKVKVAIVTSGGIVPHDNPDRIESSSATRYGIYDITGMDSMSADDFTSIHGGYDRAFVVKDPNLVVPLDVMRDLEREGVIGELANYFVSTTGTGTSVGNAKGFGESFSKKLIEDGVGAVILTSTUGTCTRCGATMVKEIERAGIPVVHLATVVPISLTIGANRIVPAIGIPHPLGDPALDAKGDKKLRRELVMRGLKALQTEVDEQTVFEG.

U350 is an active-site residue. Residue U350 is a non-standard amino acid, selenocysteine.

This sequence belongs to the GrdB/GrdF/GrdH family. Heterotetramer of two alpha and two beta subunits. Component of the sarcosine reductase complex, together with components A and C. PB is substrate specific.

The catalysed reaction is acetyl phosphate + methylamine + [thioredoxin]-disulfide + H2O = sarcosine + [thioredoxin]-dithiol + phosphate + H(+). In terms of biological role, in the first step of sarcosine reductase, the substrate is bound to component PB via a Schiff base intermediate. Then the PB-activated substrate is nucleophilically attacked by the selenol anion of component PA to transform it to a carboxymethylated selenoether and the respective amine. By action of component PC, acetyl phosphate is formed, leaving component PA in its oxidized state. Finally component PA becomes reduced by the thioredoxin system to start a new catalytic cycle of reductive deamination. The sequence is that of Sarcosine reductase complex component B subunit beta (grdF) from Peptoclostridium acidaminophilum (Eubacterium acidaminophilum).